The following is a 269-amino-acid chain: 4-hydroxy-tetrahydrodipicolinate reductase (269 aa).

NAD(+) is bound by residues 10–15 (GANGRM), glutamate 36, 99–101 (GTT), and 123–126 (AANF). Residue histidine 156 is the Proton donor/acceptor of the active site. Histidine 157 provides a ligand contact to (S)-2,3,4,5-tetrahydrodipicolinate. Lysine 160 (proton donor) is an active-site residue. 166-167 (GT) serves as a coordination point for (S)-2,3,4,5-tetrahydrodipicolinate.

This sequence belongs to the DapB family.

It is found in the cytoplasm. It carries out the reaction (S)-2,3,4,5-tetrahydrodipicolinate + NAD(+) + H2O = (2S,4S)-4-hydroxy-2,3,4,5-tetrahydrodipicolinate + NADH + H(+). The enzyme catalyses (S)-2,3,4,5-tetrahydrodipicolinate + NADP(+) + H2O = (2S,4S)-4-hydroxy-2,3,4,5-tetrahydrodipicolinate + NADPH + H(+). It functions in the pathway amino-acid biosynthesis; L-lysine biosynthesis via DAP pathway; (S)-tetrahydrodipicolinate from L-aspartate: step 4/4. In terms of biological role, catalyzes the conversion of 4-hydroxy-tetrahydrodipicolinate (HTPA) to tetrahydrodipicolinate. This chain is 4-hydroxy-tetrahydrodipicolinate reductase, found in Neisseria meningitidis serogroup A / serotype 4A (strain DSM 15465 / Z2491).